The following is a 351-amino-acid chain: Fe(3+) ions import ATP-binding protein FbpC (351 aa).

The ABC transporter domain occupies 9–239; the sequence is LVLKNINKTF…PNSLFLANFM (231 aa). 41-48 lines the ATP pocket; sequence GPSGCGKT.

This sequence belongs to the ABC transporter superfamily. Fe(3+) ion importer (TC 3.A.1.10) family. In terms of assembly, the complex is composed of two ATP-binding proteins (FbpC), two transmembrane proteins (FbpB) and a solute-binding protein (FbpA).

It is found in the cell inner membrane. It carries out the reaction Fe(3+)(out) + ATP + H2O = Fe(3+)(in) + ADP + phosphate + H(+). In terms of biological role, part of the ABC transporter complex FbpABC involved in Fe(3+) ions import. Responsible for energy coupling to the transport system. The protein is Fe(3+) ions import ATP-binding protein FbpC of Mannheimia succiniciproducens (strain KCTC 0769BP / MBEL55E).